A 130-amino-acid polypeptide reads, in one-letter code: Large ribosomal subunit protein bL17 (130 aa).

Belongs to the bacterial ribosomal protein bL17 family. Part of the 50S ribosomal subunit. Contacts protein L32.

The sequence is that of Large ribosomal subunit protein bL17 from Nitrosomonas eutropha (strain DSM 101675 / C91 / Nm57).